A 434-amino-acid chain; its full sequence is Progestin and adipoQ receptor-like protein 1 (434 aa).

Residues 1 to 201 (MNPDEVNRAL…KSIWSLHTET (201 aa)) lie on the Cytoplasmic side of the membrane. Disordered regions lie at residues 74-103 (LPQQEGHRSRATSFAGRIRAGSDDEAMPKH) and 118-137 (EINLQGTPDKRKDDEDELEV). Residues 202–222 (GNIWTHLIGCVAFFFLACWFL) form a helical membrane-spanning segment. Topologically, residues 223 to 234 (TRPDNHIQFQEK) are extracellular. The chain crosses the membrane as a helical span at residues 235–255 (VVFSFFFAGAVLCLGLSFAFH). Topologically, residues 256–273 (TLSCHSVNVVKIFCKLDY) are cytoplasmic. A helical transmembrane segment spans residues 274-294 (MGISLLIIGSFIPWIYYGFYC). Over 295–299 (RREPK) the chain is Extracellular. A helical transmembrane segment spans residues 300–320 (ITYIAMVSVLGIGAIVVSLWD). Residues 321-331 (KFSESRFRPIR) are Cytoplasmic-facing. Residues 332–352 (AAVFVGMGCSGVIPTIHYIIT) form a helical membrane-spanning segment. At 353-362 (DGVHSLFADN) the chain is on the extracellular side. Residues 363-383 (SFHWLLLMAFLYLLGAGLYAT) traverse the membrane as a helical segment. The Cytoplasmic portion of the chain corresponds to 384–403 (RTPERFFPGKCDIWFQSHQL). A helical transmembrane segment spans residues 404–424 (FHTCVVIAAFVHYYGISEMAF). Residues 425–434 (ARLNEQCPVR) lie on the Extracellular side of the membrane.

It belongs to the ADIPOR family.

Its subcellular location is the membrane. Probable receptor, which may be involved in metabolic pathways that regulate lipid metabolism such as fatty acid oxidation. This chain is Progestin and adipoQ receptor-like protein 1 (paqr-1), found in Caenorhabditis elegans.